The chain runs to 844 residues: Striatin-interacting proteins 2 (844 aa).

Over residues 1–18 (MDDPAAPGPAGSPANDNG) the composition is skewed to low complexity. Positions 1 to 58 (MDDPAAPGPAGSPANDNGNGNGNGNGNGNGGKGKPAVPKGRETFRNQRRESEGSVDCP) are disordered. A compositionally biased stretch (gly residues) spans 19-33 (NGNGNGNGNGNGGKG). The span at 39–52 (KGRETFRNQRRESE) shows a compositional bias: basic and acidic residues. Phosphoserine is present on residues Ser328, Ser339, and Ser364. A disordered region spans residues 331 to 355 (SYTLDLGESQLAPPPSKLRGRRGSR). A disordered region spans residues 370-422 (ERDLFKTEEPATEEEEESAADGERTLDGELDLLEQDPLVPPPPSQTPLSTDRV). Residues 379–389 (PATEEEEESAA) show a composition bias toward acidic residues.

It belongs to the STRIP family. In terms of assembly, part of the core of STRIPAK complexes composed of PP2A catalytic and scaffolding subunits, the striatins (PP2A regulatory subunits), the striatin-associated proteins MOB4, STRIP1 and STRIP2, PDCD10 and members of the STE20 kinases, such as STK24 and STK26. Interacts with CTTNBP2NL.

The protein resides in the cytoplasm. Functionally, plays a role in the regulation of cell morphology and cytoskeletal organization. Required in the control of cell shape. Calmodulin-binding scaffolding protein which is the center of the striatin-interacting phosphatase and kinase (STRIPAK) complexes. STRIPAK complexes have critical roles in protein (de)phosphorylation and are regulators of multiple signaling pathways including Hippo, MAPK, nuclear receptor and cytoskeleton remodeling. Different types of STRIPAK complexes are involved in a variety of biological processes such as cell growth, differentiation, apoptosis, metabolism and immune regulation. The sequence is that of Striatin-interacting proteins 2 (Strip2) from Mus musculus (Mouse).